The following is a 731-amino-acid chain: Catalase-peroxidase 2 (731 aa).

Over residues 1-10 the composition is skewed to polar residues; sequence MAETPNSDMS. The segment at 1–26 is disordered; that stretch reads MAETPNSDMSGATGGRSKRPKSNQDW. Residues 95-218 constitute a cross-link (tryptophyl-tyrosyl-methioninium (Trp-Tyr) (with M-244)); that stretch reads WHSAGTYRTA…LGASVMGLIY (124 aa). His-96 functions as the Proton acceptor in the catalytic mechanism. Residues 218-244 constitute a cross-link (tryptophyl-tyrosyl-methioninium (Tyr-Met) (with W-95)); that stretch reads YVNPEGPDGNPDPEASAKNIRQTFDRM. Heme b is bound at residue His-259.

As to quaternary structure, homodimer. The cofactor is heme b. In terms of processing, formation of the three residue Trp-Tyr-Met cross-link is important for the catalase, but not the peroxidase activity of the enzyme.

The enzyme catalyses H2O2 + AH2 = A + 2 H2O. It carries out the reaction 2 H2O2 = O2 + 2 H2O. Functionally, bifunctional enzyme with both catalase and broad-spectrum peroxidase activity. The sequence is that of Catalase-peroxidase 2 from Haloarcula marismortui (strain ATCC 43049 / DSM 3752 / JCM 8966 / VKM B-1809) (Halobacterium marismortui).